The primary structure comprises 361 residues: tRNA/tmRNA (uracil-C(5))-methyltransferase (361 aa).

5 residues coordinate S-adenosyl-L-methionine: Gln185, Tyr213, Asn218, Glu234, and Asp294. The Nucleophile role is filled by Cys319. The active-site Proton acceptor is Glu353.

The protein belongs to the class I-like SAM-binding methyltransferase superfamily. RNA M5U methyltransferase family. TrmA subfamily.

The catalysed reaction is uridine(54) in tRNA + S-adenosyl-L-methionine = 5-methyluridine(54) in tRNA + S-adenosyl-L-homocysteine + H(+). It carries out the reaction uridine(341) in tmRNA + S-adenosyl-L-methionine = 5-methyluridine(341) in tmRNA + S-adenosyl-L-homocysteine + H(+). In terms of biological role, dual-specificity methyltransferase that catalyzes the formation of 5-methyluridine at position 54 (m5U54) in all tRNAs, and that of position 341 (m5U341) in tmRNA (transfer-mRNA). The sequence is that of tRNA/tmRNA (uracil-C(5))-methyltransferase from Pseudomonas putida (strain W619).